The primary structure comprises 347 residues: MNKELLDDILSLEDKAVSEIENASSLQDLEKVRLSYLGKKGVIKAYFDNLKEIEDAGKKRNLGEVINVLRNKLDQLIMSKENILKAEEVNFKLQNEAVDITLSARPEKIGKVHPLSKVLNEVKLIFAHMGFKAVDGPDIEDEFHVFDALNTPSHHPAREEQDTFYLKNKIDDKRMVLRTHTSSVQIRTMEKTKKFPIKIVAAGRVYRNDFDATHTPMFHQIEGLYVDENVNMGQLKFTIHHFLNKFFGDKGLKIRFRNSFFPFTEPSAEVDISYKGSKWIEVLGCGMTHPNVFQNVGIDHTKYNGFAFGIGIERLAMLKYQISDLRSFYDNKISWLDHYGFHFSSLR.

Glu-265 contacts Mg(2+).

Belongs to the class-II aminoacyl-tRNA synthetase family. Phe-tRNA synthetase alpha subunit type 1 subfamily. As to quaternary structure, tetramer of two alpha and two beta subunits. Mg(2+) serves as cofactor.

Its subcellular location is the cytoplasm. The enzyme catalyses tRNA(Phe) + L-phenylalanine + ATP = L-phenylalanyl-tRNA(Phe) + AMP + diphosphate + H(+). This Wolbachia pipientis wMel protein is Phenylalanine--tRNA ligase alpha subunit.